The primary structure comprises 885 residues: Translation initiation factor IF-2 (885 aa).

The span at 123–232 (ETEAKAKAEA…EAERYSDHHI (110 aa)) shows a compositional bias: basic and acidic residues. A disordered region spans residues 123 to 289 (ETEAKAKAEA…RNRSTAPESM (167 aa)). Residues 253–266 (GRRARNKNTAKTKR) show a composition bias toward basic residues. Residues 267–276 (GGKDARDGRE) are compositionally biased toward basic and acidic residues. The 170-residue stretch at 385 to 554 (PRAPVVTIMG…LLQAEVLELK (170 aa)) folds into the tr-type G domain. A G1 region spans residues 394–401 (GHVDHGKT). GTP is bound at residue 394 to 401 (GHVDHGKT). The G2 stretch occupies residues 419-423 (GITQH). Residues 440–443 (DTPG) are G3. Residues 440–444 (DTPGH) and 494–497 (NKMD) each bind GTP. The interval 494–497 (NKMD) is G4. Residues 530 to 532 (SAK) form a G5 region.

This sequence belongs to the TRAFAC class translation factor GTPase superfamily. Classic translation factor GTPase family. IF-2 subfamily.

The protein resides in the cytoplasm. In terms of biological role, one of the essential components for the initiation of protein synthesis. Protects formylmethionyl-tRNA from spontaneous hydrolysis and promotes its binding to the 30S ribosomal subunits. Also involved in the hydrolysis of GTP during the formation of the 70S ribosomal complex. This Shewanella oneidensis (strain ATCC 700550 / JCM 31522 / CIP 106686 / LMG 19005 / NCIMB 14063 / MR-1) protein is Translation initiation factor IF-2.